The primary structure comprises 690 residues: Elongation factor G (690 aa).

The tr-type G domain maps to 8 to 283 (SRCRNIGIMA…AVVDFLPSPS (276 aa)). GTP contacts are provided by residues 17–24 (AHIDAGKT), 81–85 (DTPGH), and 135–138 (NKMD).

The protein belongs to the TRAFAC class translation factor GTPase superfamily. Classic translation factor GTPase family. EF-G/EF-2 subfamily.

It is found in the cytoplasm. Functionally, catalyzes the GTP-dependent ribosomal translocation step during translation elongation. During this step, the ribosome changes from the pre-translocational (PRE) to the post-translocational (POST) state as the newly formed A-site-bound peptidyl-tRNA and P-site-bound deacylated tRNA move to the P and E sites, respectively. Catalyzes the coordinated movement of the two tRNA molecules, the mRNA and conformational changes in the ribosome. The chain is Elongation factor G from Anaplasma marginale (strain Florida).